We begin with the raw amino-acid sequence, 347 residues long: Magnesium-protoporphyrin IX monomethyl ester [oxidative] cyclase (347 aa).

This sequence belongs to the AcsF family. The cofactor is Fe cation.

It carries out the reaction Mg-protoporphyrin IX 13-monomethyl ester + 3 NADPH + 3 O2 + 2 H(+) = 3,8-divinyl protochlorophyllide a + 3 NADP(+) + 5 H2O. Its pathway is porphyrin-containing compound metabolism; chlorophyll biosynthesis (light-independent). In terms of biological role, catalyzes the formation of the isocyclic ring in chlorophyll biosynthesis. Mediates the cyclase reaction, which results in the formation of divinylprotochlorophyllide (Pchlide) characteristic of all chlorophylls from magnesium-protoporphyrin IX 13-monomethyl ester (MgPMME). The chain is Magnesium-protoporphyrin IX monomethyl ester [oxidative] cyclase from Prochlorococcus marinus (strain SARG / CCMP1375 / SS120).